A 645-amino-acid chain; its full sequence is DNA ligase (645 aa).

NAD(+) is bound by residues 30–34 (DDEYD), 79–80 (SM), and E106. The N6-AMP-lysine intermediate role is filled by K108. Residues R129, E163, and K302 each coordinate NAD(+). Zn(2+)-binding residues include C396, C399, C412, and C417. The region spanning 570–645 (LKTNIFSGKT…IDESEYESLK (76 aa)) is the BRCT domain.

The protein belongs to the NAD-dependent DNA ligase family. LigA subfamily. It depends on Mg(2+) as a cofactor. The cofactor is Mn(2+).

The catalysed reaction is NAD(+) + (deoxyribonucleotide)n-3'-hydroxyl + 5'-phospho-(deoxyribonucleotide)m = (deoxyribonucleotide)n+m + AMP + beta-nicotinamide D-nucleotide.. Functionally, DNA ligase that catalyzes the formation of phosphodiester linkages between 5'-phosphoryl and 3'-hydroxyl groups in double-stranded DNA using NAD as a coenzyme and as the energy source for the reaction. It is essential for DNA replication and repair of damaged DNA. The chain is DNA ligase from Campylobacter fetus subsp. fetus (strain 82-40).